Here is a 1121-residue protein sequence, read N- to C-terminus: CRISPR-associated endonuclease Cas9 1 (1121 aa).

Aspartate 9 (for RuvC-like nuclease domain) is an active-site residue. Aspartate 9, glutamate 509, and glutamate 513 together coordinate Mg(2+). The 169-residue stretch at 516–684 folds into the HNH Cas9-type domain; the sequence is EDDEKKAIQK…VRKKFIERNL (169 aa). Catalysis depends on histidine 599, which acts as the Proton acceptor for HNH nuclease domain. Histidine 738 lines the Mg(2+) pocket.

This sequence belongs to the CRISPR-associated protein Cas9 family. Subtype II-A subfamily. As to quaternary structure, monomer. Binds crRNA and tracrRNA. Mg(2+) is required as a cofactor.

In terms of biological role, CRISPR (clustered regularly interspaced short palindromic repeat) is an adaptive immune system that provides protection against mobile genetic elements (viruses, transposable elements and conjugative plasmids). CRISPR clusters contain spacers, sequences complementary to antecedent mobile elements, and target invading nucleic acids. CRISPR clusters are transcribed and processed into CRISPR RNA (crRNA). In type II CRISPR systems correct processing of pre-crRNA requires a trans-encoded small RNA (tracrRNA), endogenous ribonuclease 3 (rnc) and this protein. The tracrRNA serves as a guide for ribonuclease 3-aided processing of pre-crRNA. Subsequently Cas9/crRNA/tracrRNA endonucleolytically cleaves linear or circular dsDNA target complementary to the spacer; Cas9 is inactive in the absence of the 2 guide RNAs (gRNA). Cas9 recognizes the protospacer adjacent motif (PAM) in the CRISPR repeat sequences to help distinguish self versus nonself, as targets within the bacterial CRISPR locus do not have PAMs. PAM recognition is also required for catalytic activity. Cuts target DNA when Cas9 and gRNAs are mixed. The chain is CRISPR-associated endonuclease Cas9 1 from Streptococcus thermophilus (strain ATCC BAA-491 / LMD-9).